The chain runs to 3912 residues: Chondramide synthase cmdD (3912 aa).

A Carrier 1 domain is found at 1411–1485 (APRNAREETL…ALAEVASASK (75 aa)). Ser-1446 is modified (O-(pantetheine 4'-phosphoryl)serine). Acidic residues predominate over residues 1995-2029 (ADEDDEEDDELDEEFDAEVDEEDEDEEEEEDDDGE). A disordered region spans residues 1995–2030 (ADEDDEEDDELDEEFDAEVDEEDEDEEEEEDDDGEN). Residues 2989–3064 (APRTATEETL…VLARVIDEAL (76 aa)) form the Carrier 2 domain. Residue Ser-3024 is modified to O-(pantetheine 4'-phosphoryl)serine.

It belongs to the ATP-dependent AMP-binding enzyme family. The cofactor is pantetheine 4'-phosphate.

In terms of biological role, involved in the synthesis of chondramides. Activates R-beta-tyrosine and probably phenylalanine. This chain is Chondramide synthase cmdD, found in Chondromyces crocatus.